Here is a 304-residue protein sequence, read N- to C-terminus: Lipoyl synthase (304 aa).

Residues 1–21 (MAPELIQIDLEPRKPAPKPSW) form a disordered region. [4Fe-4S] cluster is bound by residues Cys48, Cys53, Cys59, Cys74, Cys78, Cys81, and Ser287. A Radical SAM core domain is found at 60–276 (WNHKTATFML…KEEAMKMGFR (217 aa)).

This sequence belongs to the radical SAM superfamily. Lipoyl synthase family. [4Fe-4S] cluster serves as cofactor.

The protein resides in the cytoplasm. The catalysed reaction is [[Fe-S] cluster scaffold protein carrying a second [4Fe-4S](2+) cluster] + N(6)-octanoyl-L-lysyl-[protein] + 2 oxidized [2Fe-2S]-[ferredoxin] + 2 S-adenosyl-L-methionine + 4 H(+) = [[Fe-S] cluster scaffold protein] + N(6)-[(R)-dihydrolipoyl]-L-lysyl-[protein] + 4 Fe(3+) + 2 hydrogen sulfide + 2 5'-deoxyadenosine + 2 L-methionine + 2 reduced [2Fe-2S]-[ferredoxin]. The protein operates within protein modification; protein lipoylation via endogenous pathway; protein N(6)-(lipoyl)lysine from octanoyl-[acyl-carrier-protein]: step 2/2. In terms of biological role, catalyzes the radical-mediated insertion of two sulfur atoms into the C-6 and C-8 positions of the octanoyl moiety bound to the lipoyl domains of lipoate-dependent enzymes, thereby converting the octanoylated domains into lipoylated derivatives. The protein is Lipoyl synthase of Koribacter versatilis (strain Ellin345).